A 492-amino-acid polypeptide reads, in one-letter code: UPF0236 protein TTE0402 (492 aa).

This sequence belongs to the UPF0236 family.

The polypeptide is UPF0236 protein TTE0402 (Caldanaerobacter subterraneus subsp. tengcongensis (strain DSM 15242 / JCM 11007 / NBRC 100824 / MB4) (Thermoanaerobacter tengcongensis)).